Consider the following 142-residue polypeptide: Large ribosomal subunit protein uL11 (142 aa).

The protein belongs to the universal ribosomal protein uL11 family. As to quaternary structure, part of the ribosomal stalk of the 50S ribosomal subunit. Interacts with L10 and the large rRNA to form the base of the stalk. L10 forms an elongated spine to which L12 dimers bind in a sequential fashion forming a multimeric L10(L12)X complex. Post-translationally, one or more lysine residues are methylated.

Functionally, forms part of the ribosomal stalk which helps the ribosome interact with GTP-bound translation factors. The chain is Large ribosomal subunit protein uL11 from Aeromonas hydrophila subsp. hydrophila (strain ATCC 7966 / DSM 30187 / BCRC 13018 / CCUG 14551 / JCM 1027 / KCTC 2358 / NCIMB 9240 / NCTC 8049).